The sequence spans 129 residues: Small ribosomal subunit protein uS11 (129 aa).

This sequence belongs to the universal ribosomal protein uS11 family. As to quaternary structure, part of the 30S ribosomal subunit. Interacts with proteins S7 and S18. Binds to IF-3.

In terms of biological role, located on the platform of the 30S subunit, it bridges several disparate RNA helices of the 16S rRNA. Forms part of the Shine-Dalgarno cleft in the 70S ribosome. The polypeptide is Small ribosomal subunit protein uS11 (Staphylococcus haemolyticus (strain JCSC1435)).